The sequence spans 820 residues: Sodium/hydrogen exchanger 1 (820 aa).

The Extracellular segment spans residues 1–102 (MMLRWSGIWG…FPVLDIDYLH (102 aa)). The disordered stretch occupies residues 44–71 (ASTIRGSEPPRERSIGDVTTAPSEPLHH). Residues 103–125 (VRTPFEISLWILLACLMKIGFHV) form a helical membrane-spanning segment. Over 126–134 (IPTISSIVP) the chain is Cytoplasmic. A helical membrane pass occupies residues 135 to 152 (ESCLLIVVGLLVGGLIKG). Over 153 to 162 (VGETPPFLQS) the chain is Extracellular. Residues 163 to 180 (DVFFLFLLPPIILDAGYF) traverse the membrane as a helical segment. Residues 181–190 (LPLRQFTENL) lie on the Cytoplasmic side of the membrane. A helical membrane pass occupies residues 191–219 (GTILIFAVVGTLWNAFFLGGLLYAVCLVG). The Extracellular portion of the chain corresponds to 220-226 (GEQINNI). The chain crosses the membrane as a helical span at residues 227–253 (GLLDTLLFGSIISAVDPVAVLAVFEEI). Over 254–256 (HIN) the chain is Cytoplasmic. The chain crosses the membrane as a helical span at residues 257 to 287 (ELLHILVFGESLLNDAVTVVLYHLFEEFASY). Topologically, residues 288–291 (EYVG) are extracellular. A helical transmembrane segment spans residues 292 to 326 (ISDIFLGFLSFFVVSLGGVFVGVVYGVIAAFTSRF). Residues 327 to 332 (TSHIRV) are Cytoplasmic-facing. A helical membrane pass occupies residues 333–345 (IEPLFVFLYSYMA). Topologically, residues 346–354 (YLSAELFHL) are extracellular. A helical transmembrane segment spans residues 355 to 375 (SGIMALIASGVVMRPYVEANI). Residues 376–377 (SH) lie on the Cytoplasmic side of the membrane. The chain crosses the membrane as a helical span at residues 378–408 (KSHTTIKYFLKMWSSVSETLIFIFLGVSTVA). The Extracellular portion of the chain corresponds to 409-414 (GSHQWN). The chain crosses the membrane as a helical span at residues 415–442 (WTFVISTLLFCLIARVLGVLVLTWFINK). Residues 443–448 (FRIVKL) lie on the Cytoplasmic side of the membrane. Residues 449–473 (TPKDQFIIAYGGLRGAIAFSLGYLL) form a helical membrane-spanning segment. Over 474 to 479 (DKKHFP) the chain is Extracellular. The chain crosses the membrane as a helical span at residues 480 to 509 (MCDLFLTAIITVIFFTVFVQGMTIRPLVDL). The segment at 505 to 571 (PLVDLLAVKK…VKKCLIAGER (67 aa)) is interaction with TESC. Topologically, residues 510–820 (LAVKKKQETK…EGEPFIPKGQ (311 aa)) are cytoplasmic. Residues 513–520 (KKKQETKR) are PI(4,5)P2-binding region. The segment at 519–549 (KRSINEEIHTQFLDHLLTGIEDICGHYGHHH) is interaction with CHP2. Positions 544-549 (HYGHHH) are confers pH-dependent PI(4,5)P2 binding. Residues 556–564 (RFNKKYVKK) form a PI(4,5)P2-binding region region. Phosphoserine is present on residues Ser603 and Ser606. Thr607 bears the Phosphothreonine mark. A phosphoserine mark is found at Ser609 and Ser652. An interaction with TESC region spans residues 637–820 (KILRSNLQKT…EGEPFIPKGQ (184 aa)). The segment at 637–820 (KILRSNLQKT…EGEPFIPKGQ (184 aa)) is interaction with CALM1. The interval 688–691 (LTVP) is interaction with PPP3CA. Phosphoserine occurs at positions 697, 701, and 707. An interaction with PPP3CA region spans residues 719 to 724 (PVITID). A phosphoserine mark is found at Ser727, Ser730, and Ser733. Positions 747-820 (GLKRGPRTTP…EGEPFIPKGQ (74 aa)) are disordered. A phosphothreonine mark is found at Thr755 and Thr784. 2 positions are modified to phosphoserine: Ser790 and Ser801.

It belongs to the monovalent cation:proton antiporter 1 (CPA1) transporter (TC 2.A.36) family. Homodimer; dimerization is crucial for its function. Oligomer. Interacts with CALM1 in a calcium-dependent manner. Interacts with TESC. Interacts (via residues 504-563) with CHP1. The interaction with CHP1 occurs at the plasma membrane in a calcium-dependent manner. Interacts with CHP2. The interaction with CHP2 occurs in a calcium-dependent manner. Interacts with EZR; regulates the cytoskeletal interactions of SLC9A1 and promotes stress fiber formation. N-glycosylated and O-glycosylated in the N-terminal region. Post-translationally, ubiquitinated, leading to its degradation by the proteasome. Ubiquitination is reduced by CHP1. In terms of processing, palmitoylated; may play a major role in SLC9A1 regulation. Phosphorylation at Thr-784 increases SLC9A1 activity; specifically dephosphorylated by PPP3CA. Specifically dephosphorylated at Thr-784 by PPP3CA that negatively regulates SLC9A1 activity. Phosphorylation at Ser-652 by AKT1 reduces SLC9A1 binding to CALM1. In terms of tissue distribution, widely expressed.

It is found in the cell membrane. The protein resides in the basolateral cell membrane. The enzyme catalyses Na(+)(in) + H(+)(out) = Na(+)(out) + H(+)(in). It carries out the reaction Li(+)(out) + H(+)(in) = Li(+)(in) + H(+)(out). It catalyses the reaction Li(+)(in) + Na(+)(out) = Li(+)(out) + Na(+)(in). With respect to regulation, activated at acidic pHs. Inhibited by cariporide and eniporide. Inhibited by amiloride and 5-amino-substituted derivatives. Phosphatidylinositol 4,5-bisphosphate (PI(4,5)P2) bind and activates SLC9A1 transporter activity. In terms of biological role, electroneutral Na(+) /H(+) antiporter that extrudes Na(+) in exchange for external protons driven by the inward sodium ion chemical gradient, protecting cells from acidification that occurs from metabolism. Exchanges intracellular H(+) ions for extracellular Na(+) in 1:1 stoichiometry. Plays a key role in maintening intracellular pH neutral and cell volume, and thus is important for cell growth, proliferation, migration and survival. In addition, can transport lithium Li(+) and also functions as a Na(+)/Li(+) antiporter. SLC9A1 also functions in membrane anchoring and organization of scaffolding complexes that coordinate signaling inputs. The sequence is that of Sodium/hydrogen exchanger 1 (Slc9a1) from Rattus norvegicus (Rat).